The chain runs to 290 residues: Malonyl-[acyl-carrier protein] O-methyltransferase (290 aa).

The protein belongs to the methyltransferase superfamily.

It catalyses the reaction malonyl-[ACP] + S-adenosyl-L-methionine = malonyl-[ACP] methyl ester + S-adenosyl-L-homocysteine. It functions in the pathway cofactor biosynthesis; biotin biosynthesis. Its function is as follows. Converts the free carboxyl group of a malonyl-thioester to its methyl ester by transfer of a methyl group from S-adenosyl-L-methionine (SAM). It allows to synthesize pimeloyl-ACP via the fatty acid synthetic pathway. The protein is Malonyl-[acyl-carrier protein] O-methyltransferase of Gallionella capsiferriformans (strain ES-2) (Gallionella ferruginea capsiferriformans (strain ES-2)).